A 146-amino-acid chain; its full sequence is Metallothiol transferase FosB (146 aa).

One can recognise a VOC domain in the interval G4–G120. Mg(2+)-binding residues include H7, H66, and E116. Catalysis depends on E116, which acts as the Proton donor/acceptor.

This sequence belongs to the fosfomycin resistance protein family. FosB subfamily. In terms of assembly, homodimer. Requires Mg(2+) as cofactor.

It is found in the cytoplasm. Its function is as follows. Metallothiol transferase which confers resistance to fosfomycin by catalyzing the addition of a thiol cofactor to fosfomycin. L-cysteine is probably the physiological thiol donor. The polypeptide is Metallothiol transferase FosB (Shouchella clausii (strain KSM-K16) (Alkalihalobacillus clausii)).